The sequence spans 331 residues: Probable cytosolic iron-sulfur protein assembly protein Ciao1 (331 aa).

7 WD repeats span residues 12–51 (GHKG…WTTK), 57–96 (GHKR…ATLE), 97–136 (GHEN…EFEC), 142–181 (AHSQ…SDWD), 188–227 (SHTS…NEAG), 246–285 (LHTR…KRDA), and 297–331 (AHEQ…KLQE).

The protein belongs to the WD repeat CIA1 family.

In terms of biological role, essential component of the cytosolic iron-sulfur (Fe/S) protein assembly machinery. Required for the maturation of extramitochondrial Fe/S proteins. The polypeptide is Probable cytosolic iron-sulfur protein assembly protein Ciao1 (Drosophila mojavensis (Fruit fly)).